Here is a 468-residue protein sequence, read N- to C-terminus: Sulfate adenylyltransferase subunit 1 (468 aa).

Positions 22–239 constitute a tr-type G domain; that stretch reads KELLRFLTCG…TVEIASDKNA (218 aa). The G1 stretch occupies residues 31–38; that stretch reads GSVDDGKS. Residue 31–38 coordinates GTP; it reads GSVDDGKS. Positions 89–93 are G2; the sequence is GITID. The tract at residues 110–113 is G3; that stretch reads DTPG. Residues 110–114 and 165–168 each bind GTP; these read DTPGH and NKMD. Residues 165–168 form a G4 region; it reads NKMD. The tract at residues 202 to 204 is G5; sequence SAL.

The protein belongs to the TRAFAC class translation factor GTPase superfamily. Classic translation factor GTPase family. CysN/NodQ subfamily. As to quaternary structure, heterodimer composed of CysD, the smaller subunit, and CysN.

It carries out the reaction sulfate + ATP + H(+) = adenosine 5'-phosphosulfate + diphosphate. It participates in sulfur metabolism; hydrogen sulfide biosynthesis; sulfite from sulfate: step 1/3. Its function is as follows. With CysD forms the ATP sulfurylase (ATPS) that catalyzes the adenylation of sulfate producing adenosine 5'-phosphosulfate (APS) and diphosphate, the first enzymatic step in sulfur assimilation pathway. APS synthesis involves the formation of a high-energy phosphoric-sulfuric acid anhydride bond driven by GTP hydrolysis by CysN coupled to ATP hydrolysis by CysD. This chain is Sulfate adenylyltransferase subunit 1, found in Teredinibacter turnerae (strain ATCC 39867 / T7901).